The sequence spans 252 residues: Flap endonuclease Xni (252 aa).

Residue aspartate 105 participates in Mg(2+) binding. Positions 161–251 (VESTQFIDYL…NVNLKQFRIE (91 aa)) constitute a 5'-3' exonuclease domain. 5 residues coordinate K(+): leucine 172, alanine 173, proline 181, valine 183, and isoleucine 186. The interaction with DNA stretch occupies residues 185–190 (GIGPKS).

The protein belongs to the Xni family. The cofactor is Mg(2+). K(+) is required as a cofactor.

Its function is as follows. Has flap endonuclease activity. During DNA replication, flap endonucleases cleave the 5'-overhanging flap structure that is generated by displacement synthesis when DNA polymerase encounters the 5'-end of a downstream Okazaki fragment. This is Flap endonuclease Xni from Shewanella halifaxensis (strain HAW-EB4).